The following is a 268-amino-acid chain: Ribosomal RNA small subunit methyltransferase A (268 aa).

S-adenosyl-L-methionine contacts are provided by N18, L20, G45, E66, D91, and N112.

This sequence belongs to the class I-like SAM-binding methyltransferase superfamily. rRNA adenine N(6)-methyltransferase family. RsmA subfamily.

It localises to the cytoplasm. The enzyme catalyses adenosine(1518)/adenosine(1519) in 16S rRNA + 4 S-adenosyl-L-methionine = N(6)-dimethyladenosine(1518)/N(6)-dimethyladenosine(1519) in 16S rRNA + 4 S-adenosyl-L-homocysteine + 4 H(+). In terms of biological role, specifically dimethylates two adjacent adenosines (A1518 and A1519) in the loop of a conserved hairpin near the 3'-end of 16S rRNA in the 30S particle. May play a critical role in biogenesis of 30S subunits. The polypeptide is Ribosomal RNA small subunit methyltransferase A (Shewanella baltica (strain OS185)).